The chain runs to 678 residues: Pescadillo homolog (678 aa).

A disordered region spans residues 265-289 (PQQQTKTNNTTKKSKSTTAAAAATT). Residues 269–289 (TKTNNTTKKSKSTTAAAAATT) show a composition bias toward low complexity. A BRCT domain is found at 352-442 (DVTTLFKGFH…LLLPYSEYTI (91 aa)). Disordered regions lie at residues 485 to 601 (TNAE…EDTK) and 626 to 678 (ATAN…KQKK). The span at 505–518 (SDGESDDEDDEDLE) shows a compositional bias: acidic residues. A compositionally biased stretch (basic and acidic residues) spans 519–531 (HLETRYTEELRKE). Residues 541-574 (VDDDDEEEEDGEEDGEEEEEEEDGEEESESESES) are compositionally biased toward acidic residues. Residues 581–640 (VLTKKQRDELNKQKQAEEDTKLAELMIRKKDKWIYNKVKETNQQRATANQTLLEKRNKVE) are a coiled coil. Basic and acidic residues-rich tracts occupy residues 585–601 (KQRD…EDTK) and 633–643 (LEKRNKVESGK). Over residues 649-678 (VKVAPQPKKPAPLVKKSQQKQQQASKKQKK) the composition is skewed to low complexity.

The protein belongs to the pescadillo family.

It localises to the nucleus. It is found in the nucleolus. Its subcellular location is the nucleoplasm. In terms of biological role, required for maturation of ribosomal RNAs and formation of the large ribosomal subunit. This is Pescadillo homolog from Dictyostelium discoideum (Social amoeba).